We begin with the raw amino-acid sequence, 207 residues long: ATP phosphoribosyltransferase (207 aa).

This sequence belongs to the ATP phosphoribosyltransferase family. Short subfamily. Heteromultimer composed of HisG and HisZ subunits.

The protein localises to the cytoplasm. The enzyme catalyses 1-(5-phospho-beta-D-ribosyl)-ATP + diphosphate = 5-phospho-alpha-D-ribose 1-diphosphate + ATP. Its pathway is amino-acid biosynthesis; L-histidine biosynthesis; L-histidine from 5-phospho-alpha-D-ribose 1-diphosphate: step 1/9. Functionally, catalyzes the condensation of ATP and 5-phosphoribose 1-diphosphate to form N'-(5'-phosphoribosyl)-ATP (PR-ATP). Has a crucial role in the pathway because the rate of histidine biosynthesis seems to be controlled primarily by regulation of HisG enzymatic activity. This chain is ATP phosphoribosyltransferase (hisG), found in Dictyoglomus turgidum (strain DSM 6724 / Z-1310).